Consider the following 212-residue polypeptide: Large ribosomal subunit protein mL48 (212 aa).

Residues Met1–Thr28 constitute a mitochondrion transit peptide. Lys199 carries the N6-succinyllysine modification.

This sequence belongs to the mitochondrion-specific ribosomal protein mL48 family. Component of the mitochondrial large ribosomal subunit (mt-LSU). Mature mammalian 55S mitochondrial ribosomes consist of a small (28S) and a large (39S) subunit. The 28S small subunit contains a 12S ribosomal RNA (12S mt-rRNA) and 30 different proteins. The 39S large subunit contains a 16S rRNA (16S mt-rRNA), a copy of mitochondrial valine transfer RNA (mt-tRNA(Val)), which plays an integral structural role, and 52 different proteins. mL48 is located at the central protuberance. Interacts with OXA1L.

It localises to the mitochondrion. The polypeptide is Large ribosomal subunit protein mL48 (MRPL48) (Homo sapiens (Human)).